The primary structure comprises 1005 residues: Band 4.1-like protein 2 (1005 aa).

Residues 1–80 (MTTEVGSVSE…SRGISRFIPP (80 aa)) form a disordered region. T2 is subject to N-acetylthreonine. A Phosphoserine modification is found at S7. Basic and acidic residues predominate over residues 22–31 (ATKEKPKEVA). Residues S39, S58, and S87 each carry the phosphoserine modification. The residue at position 89 (T89) is a Phosphothreonine. Positions 93–196 (AKDGGDKKEP…GGAAKRETKE (104 aa)) are disordered. 2 stretches are compositionally biased toward basic and acidic residues: residues 111–157 (VLDK…EKPS) and 169–196 (VSKE…ETKE). Glycyl lysine isopeptide (Lys-Gly) (interchain with G-Cter in SUMO2) cross-links involve residues K140 and K144. 10 positions are modified to phosphoserine: S170, S208, S386, S402, S499, S550, S562, S575, S598, and S614. The FERM domain maps to 218 to 499 (VQCKVTLLDG…EHHTFYRLVS (282 aa)). The interval 502–610 (QPPKAKFLTL…KAPHLQLIEG (109 aa)) is hydrophilic. Residues 611–676 (KKNSLRVEGD…WEKRRITPLS (66 aa)) are spectrin--actin-binding. Y623 carries the post-translational modification Phosphotyrosine. S627 and S647 each carry phosphoserine. The tract at residues 652–800 (KRNFMESTPE…EEAVPEASPV (149 aa)) is disordered. Residues 675 to 686 (LSLQTQGSSHET) show a composition bias toward polar residues. Positions 690-711 (VEEKKRAEVGKDERVITEEMNG) are enriched in basic and acidic residues. Phosphoserine occurs at positions 715 and 718. The span at 734–746 (STSLSSESSSSSS) shows a compositional bias: low complexity. Basic and acidic residues-rich tracts occupy residues 754-770 (GEYR…IREE) and 780-793 (EPRP…REEA). T763 carries the phosphothreonine modification. S828 carries the post-translational modification Phosphoserine. Positions 855 to 1005 (HVDIDVLPQI…ETELAEEGED (151 aa)) are C-terminal (CTD).

Interacts with FCGR1A. Interacts with TRPC4. Interacts (via CTD domain) with FKBP2. Interacts with NUMA1; this interaction is negatively regulated by CDK1 during metaphase and promotes anaphase-specific localization of NUMA1 in symmetrically dividing cells. Widely expressed.

It localises to the cytoplasm. It is found in the cytoskeleton. The protein localises to the cell cortex. The protein resides in the cell membrane. Required for dynein-dynactin complex and NUMA1 recruitment at the mitotic cell cortex during anaphase. This is Band 4.1-like protein 2 from Homo sapiens (Human).